The following is a 209-amino-acid chain: MSKVTEITHPLILHKLAFIRDKNTGSKDFRELVSEVSMLMAYEVTRNLPMEEIEIETPVCKTKCKVLAGKKVAIVPILRAGLGMVDGMLQLIPAAKVGHIGLYRDEETLQPVEYFCKLPQDIAERDVIVVDPMLATGGSAADAITLLKKRGAKQIRLMCLISSPEGIEFVQKAHPDVDIYVACIDEKLNDHGYIVPGLGDAGDRLFGTK.

Residues Arg79, Arg104, and 131–139 (DPMLATGGS) each bind 5-phospho-alpha-D-ribose 1-diphosphate. Uracil is bound by residues Ile194 and 199-201 (GDA). Asp200 contacts 5-phospho-alpha-D-ribose 1-diphosphate.

Belongs to the UPRTase family. Requires Mg(2+) as cofactor.

The catalysed reaction is UMP + diphosphate = 5-phospho-alpha-D-ribose 1-diphosphate + uracil. It functions in the pathway pyrimidine metabolism; UMP biosynthesis via salvage pathway; UMP from uracil: step 1/1. Allosterically activated by GTP. Its function is as follows. Catalyzes the conversion of uracil and 5-phospho-alpha-D-ribose 1-diphosphate (PRPP) to UMP and diphosphate. The chain is Uracil phosphoribosyltransferase from Clostridium perfringens (strain ATCC 13124 / DSM 756 / JCM 1290 / NCIMB 6125 / NCTC 8237 / Type A).